Consider the following 150-residue polypeptide: UPF0735 ACT domain-containing protein Csac_0995 (150 aa).

The region spanning 72-147 is the ACT domain; the sequence is TLALVLQDVP…GVKKIEILGR (76 aa).

The protein belongs to the UPF0735 family.

The protein is UPF0735 ACT domain-containing protein Csac_0995 of Caldicellulosiruptor saccharolyticus (strain ATCC 43494 / DSM 8903 / Tp8T 6331).